The sequence spans 59 residues: Conotoxin Cl14.4 (59 aa).

The N-terminal stretch at 1-19 is a signal peptide; that stretch reads MKFLLFLSVALLLTSFIET. A propeptide spanning residues 20–36 is cleaved from the precursor; that stretch reads VTVNKAGMERPSRALVG. An Isoleucine amide modification is found at Ile58.

In terms of processing, contains 2 disulfide bonds. Expressed by the venom duct.

The protein localises to the secreted. The sequence is that of Conotoxin Cl14.4 from Californiconus californicus (California cone).